The following is a 462-amino-acid chain: Nuclear factor interleukin-3-regulated protein (462 aa).

Lys24 participates in a covalent cross-link: Glycyl lysine isopeptide (Lys-Gly) (interchain with G-Cter in SUMO2). Residues 73-136 form the bZIP domain; sequence DAMYWEKRRK…GLISSTAYAQ (64 aa). The interval 79–95 is basic motif; the sequence is KRRKNNEAAKRSREKRR. Residues 99 to 106 are leucine-zipper; the sequence is LVLENKLI. 2 disordered regions span residues 189–237 and 258–302; these read DVSE…DDRG and SPPL…IHSP. Positions 201–210 are enriched in polar residues; sequence ESSVQGSCRS. Residue Lys214 forms a Glycyl lysine isopeptide (Lys-Gly) (interchain with G-Cter in SUMO2) linkage. Residue Lys219 forms a Glycyl lysine isopeptide (Lys-Gly) (interchain with G-Cter in SUMO1); alternate linkage. Lys219 is covalently cross-linked (Glycyl lysine isopeptide (Lys-Gly) (interchain with G-Cter in SUMO2); alternate). Basic and acidic residues predominate over residues 227-237; that stretch reads SYTREPRDDRG. Residues 264–274 show a composition bias toward polar residues; that stretch reads VNRSSSNSPRT. The tract at residues 299–363 is necessary for transcriptional repression and sufficient for interaction with DR1; it reads IHSPVELKHV…PIDMTSKRHF (65 aa). Position 301 is a phosphoserine (Ser301). Glycyl lysine isopeptide (Lys-Gly) (interchain with G-Cter in SUMO2) cross-links involve residues Lys306, Lys314, Lys326, Lys332, Lys337, and Lys350. Ser353 is modified (phosphoserine). Residues Lys360, Lys394, Lys401, Lys406, Lys412, Lys419, Lys424, Lys434, and Lys448 each participate in a glycyl lysine isopeptide (Lys-Gly) (interchain with G-Cter in SUMO2) cross-link.

Belongs to the bZIP family. NFIL3 subfamily. In terms of assembly, homodimer. Binds DNA as a dimer. Interacts with DR1. Interacts with PER2 and CRY2. Interacts with NR0B2. Interacts with MYSM1. As to expression, expressed in bladder stomach, thyroid, spinal cord, lymph node, trachea, adrenal gland, bone marrow and muscle.

Its subcellular location is the nucleus. Functionally, acts as a transcriptional regulator that recognizes and binds to the sequence 5'-[GA]TTA[CT]GTAA[CT]-3', a sequence present in many cellular and viral promoters. Represses transcription from promoters with activating transcription factor (ATF) sites. Represses promoter activity in osteoblasts. Represses transcriptional activity of PER1. Represses transcriptional activity of PER2 via the B-site on the promoter. Activates transcription from the interleukin-3 promoter in T-cells. Competes for the same consensus-binding site with PAR DNA-binding factors (DBP, HLF and TEF). Component of the circadian clock that acts as a negative regulator for the circadian expression of PER2 oscillation in the cell-autonomous core clock. Protects pro-B cells from programmed cell death. Represses the transcription of CYP2A5. Positively regulates the expression and activity of CES2 by antagonizing the repressive action of NR1D1 on CES2. Required for the development of natural killer cell precursors. In Homo sapiens (Human), this protein is Nuclear factor interleukin-3-regulated protein (NFIL3).